Consider the following 129-residue polypeptide: Small ribosomal subunit protein uS8c (129 aa).

The protein belongs to the universal ribosomal protein uS8 family. As to quaternary structure, part of the 30S ribosomal subunit.

It is found in the plastid. Its subcellular location is the chloroplast. Functionally, one of the primary rRNA binding proteins, it binds directly to 16S rRNA central domain where it helps coordinate assembly of the platform of the 30S subunit. This Oltmannsiellopsis viridis (Marine flagellate) protein is Small ribosomal subunit protein uS8c (rps8).